Here is a 443-residue protein sequence, read N- to C-terminus: Anthocyanidin 3-O-glucoside 5-O-glucosyltransferase 2 (443 aa).

Positions 1–22 are cleaved as a signal peptide; sequence MVRRRVLLATFPAQGHINPALQ. Histidine 16 functions as the Proton acceptor in the catalytic mechanism. Residue histidine 16 coordinates an anthocyanidin. UDP-alpha-D-glucose is bound by residues glutamine 340, histidine 355, tryptophan 358, asparagine 359, serine 360, glutamate 363, aspartate 379, and glutamine 380.

The protein belongs to the UDP-glycosyltransferase family.

The catalysed reaction is an anthocyanidin 3-O-beta-D-glucoside + UDP-alpha-D-glucose = an anthocyanidin 3,5-di-O-beta-D-glucoside + UDP + 2 H(+). It functions in the pathway pigment biosynthesis; anthocyanin biosynthesis. Catalyzes the glucosylation at the O-5 position of anthocyanidin 3-glucosides to form anthocyanidin 3,5-di-O-glucosides using UDP-glucose as sugar donor. Anthocyanidin 3,5-di-O-glucosides are molecules that are responsible for pigmentation. Also acts on anthocyanidin 3-O-(6-O-malonylglucoside). Much less active with hydroxycinnamoylglucose derivatives. No activity in the absence of the 3-O-glucoside group. In Perilla frutescens (Beefsteak mint), this protein is Anthocyanidin 3-O-glucoside 5-O-glucosyltransferase 2 (PF3R6).